Reading from the N-terminus, the 444-residue chain is Methylenetetrahydrofolate--tRNA-(uracil-5-)-methyltransferase TrmFO (444 aa).

FAD is bound at residue 9–14; that stretch reads GAGMAG.

This sequence belongs to the MnmG family. TrmFO subfamily. FAD serves as cofactor.

It is found in the cytoplasm. It carries out the reaction uridine(54) in tRNA + (6R)-5,10-methylene-5,6,7,8-tetrahydrofolate + NADH + H(+) = 5-methyluridine(54) in tRNA + (6S)-5,6,7,8-tetrahydrofolate + NAD(+). The catalysed reaction is uridine(54) in tRNA + (6R)-5,10-methylene-5,6,7,8-tetrahydrofolate + NADPH + H(+) = 5-methyluridine(54) in tRNA + (6S)-5,6,7,8-tetrahydrofolate + NADP(+). In terms of biological role, catalyzes the folate-dependent formation of 5-methyl-uridine at position 54 (M-5-U54) in all tRNAs. The protein is Methylenetetrahydrofolate--tRNA-(uracil-5-)-methyltransferase TrmFO of Cereibacter sphaeroides (strain ATCC 17029 / ATH 2.4.9) (Rhodobacter sphaeroides).